Here is a 372-residue protein sequence, read N- to C-terminus: Uroporphyrinogen decarboxylase (372 aa).

Residues 35–39, aspartate 85, tyrosine 166, serine 221, and histidine 342 contribute to the substrate site; that span reads RQAGR.

This sequence belongs to the uroporphyrinogen decarboxylase family. As to quaternary structure, homodimer.

It localises to the cytoplasm. It catalyses the reaction uroporphyrinogen III + 4 H(+) = coproporphyrinogen III + 4 CO2. Its pathway is porphyrin-containing compound metabolism; protoporphyrin-IX biosynthesis; coproporphyrinogen-III from 5-aminolevulinate: step 4/4. In terms of biological role, catalyzes the decarboxylation of four acetate groups of uroporphyrinogen-III to yield coproporphyrinogen-III. The protein is Uroporphyrinogen decarboxylase of Methylibium petroleiphilum (strain ATCC BAA-1232 / LMG 22953 / PM1).